Reading from the N-terminus, the 462-residue chain is MITVVTSRLSLLPPVFSVVNSSSSRSKDMNLEPKKKVKLREDWREKSRPIPPGGTYPAKDHCSQCGLCDTYYIAHVKEACAFLGDGMSRIESLEPVVHGRGRKADSLQDTYFGVHQEQLYARKLKPVEGAQWTGIVTTIAIEMLKSNMVEAVVCVQSDPEDRLSPRPVLARTPEEVLAARGVKPTLSPNLNTLELIEASGVKRLLFCGVGCQVQALRSVEQHLNLEKLYVLGTNCVDNGTRDGLDKFLKAASKEPETVLHYEFMQDYKVQLKHLDGHIEEVPYFSLPANDLVDVIAPSCYSCFDYTNALADLVIGYMGVPKYSGLNMTDHPQYITVRNERGKEMLSLVENLLEITPTISSGDRRPFVTETVKADDAAKFGQGPAQPAPLFVGNIIAFILNLVGPKGLEFARYSLDYHTIRNYLYVNRKWGKQRANTHMPSYAKKIVEMYNKNGQIDKMLSKK.

Residues 1–20 constitute a chloroplast transit peptide; sequence MITVVTSRLSLLPPVFSVVN.

It belongs to the FrhB family. Interacts with SGR1, the chlorophyll catabolic enzymes (CCEs) NYC1, NOL and RCCR, and the LHCII complex. Part of a SGR1-CCE-LHCII complex, which acts in chlorophyll breakdown. Requires FAD as cofactor. Iron-sulfur cluster serves as cofactor.

It is found in the plastid. The protein localises to the chloroplast. The enzyme catalyses chlorophyll a + 2 oxidized [2Fe-2S]-[ferredoxin] + H2O = 7(1)-hydroxychlorophyll a + 2 reduced [2Fe-2S]-[ferredoxin] + 2 H(+). In terms of biological role, probable iron-sulfur flavoprotein that converts 7-hydroxymethyl chlorophyll a to chlorophyll a using ferredoxin as a reducing equivalent. Catalyzes the reduction of a hydroxymethyl group to a methyl group. Belongs to the chlorophyll catabolic enzymes (CCEs). This is 7-hydroxymethyl chlorophyll a reductase, chloroplastic (HCAR) from Arabidopsis thaliana (Mouse-ear cress).